We begin with the raw amino-acid sequence, 300 residues long: Pleckstrin homology domain-containing family A member 3 (300 aa).

Positions 1–93 (MEGVLYKWTN…WLVALGSSKA (93 aa)) constitute a PH domain. Residues 1-100 (MEGVLYKWTN…SKACLTDTRT (100 aa)) form an interaction with SACM1L region. An interaction with VAPA and VAPB region spans residues 97-300 (DTRTKKEKEI…SEDTLPSFSS (204 aa)). Residues 197 to 300 (PVSPSPVQMM…SEDTLPSFSS (104 aa)) form a disordered region. Phosphoserine is present on residues serine 236 and serine 244. A compositionally biased stretch (basic and acidic residues) spans 279 to 290 (EESRLMAKKQSE).

In terms of assembly, interacts with GTP-bound ARF1. Interacts with SACM1L and VAPA and/or VAPB to form a ternary complex. As to expression, widely expressed.

It localises to the golgi apparatus. It is found in the trans-Golgi network membrane. Functionally, plays a role in regulation of vesicular cargo transport from the trans-Golgi network (TGN) to the plasma membrane. Regulates Golgi phosphatidylinositol 4-phosphate (PtdIns(4)P) levels and activates the PtdIns(4)P phosphatase activity of SACM1L when it binds PtdIns(4)P in 'trans' configuration. Binds preferentially to PtdIns(4)P. Negatively regulates APOB secretion from hepatocytes. This Homo sapiens (Human) protein is Pleckstrin homology domain-containing family A member 3 (PLEKHA3).